Reading from the N-terminus, the 679-residue chain is DNA ligase (679 aa).

NAD(+) is bound by residues 86–90 (DEAYD) and 129–130 (ST). The active-site N6-AMP-lysine intermediate is Lys-167. Residues Arg-183, Glu-214, and Lys-326 each contribute to the NAD(+) site. Positions 417, 420, 433, and 439 each coordinate Zn(2+). Residues 599–679 (GEKSPISGKT…EAYRQLVSLD (81 aa)) enclose the BRCT domain.

It belongs to the NAD-dependent DNA ligase family. LigA subfamily. Mg(2+) is required as a cofactor. Mn(2+) serves as cofactor.

The enzyme catalyses NAD(+) + (deoxyribonucleotide)n-3'-hydroxyl + 5'-phospho-(deoxyribonucleotide)m = (deoxyribonucleotide)n+m + AMP + beta-nicotinamide D-nucleotide.. Its function is as follows. DNA ligase that catalyzes the formation of phosphodiester linkages between 5'-phosphoryl and 3'-hydroxyl groups in double-stranded DNA using NAD as a coenzyme and as the energy source for the reaction. It is essential for DNA replication and repair of damaged DNA. This chain is DNA ligase, found in Desulfotalea psychrophila (strain LSv54 / DSM 12343).